We begin with the raw amino-acid sequence, 259 residues long: tRNA (guanine-N(1)-)-methyltransferase (259 aa).

Residues glycine 117 and 137-142 (LGDFVL) contribute to the S-adenosyl-L-methionine site.

The protein belongs to the RNA methyltransferase TrmD family. As to quaternary structure, homodimer.

The protein resides in the cytoplasm. It carries out the reaction guanosine(37) in tRNA + S-adenosyl-L-methionine = N(1)-methylguanosine(37) in tRNA + S-adenosyl-L-homocysteine + H(+). In terms of biological role, specifically methylates guanosine-37 in various tRNAs. The polypeptide is tRNA (guanine-N(1)-)-methyltransferase (Polaromonas sp. (strain JS666 / ATCC BAA-500)).